An 81-amino-acid chain; its full sequence is uncharacterized protein (81 aa).

The segment at 11–34 (GSVSSSNKVSVANGSSSSSFGSNG) is disordered.

This is an uncharacterized protein from Dictyostelium discoideum (Social amoeba).